Reading from the N-terminus, the 246-residue chain is Flavin-dependent thymidylate synthase (246 aa).

The region spanning 17–241 (ITVELVKSAA…PLTHAAFNAN (225 aa)) is the ThyX domain. FAD contacts are provided by residues Ser69, 92–94 (RHR), and Glu101. DUMP contacts are provided by residues 89–92 (EFMR), 101–105 (EESGR), and Arg173. A ThyX motif motif is present at residues 92–103 (RHRVGWSYNEES). Residues 189 to 191 (NAR) and His195 each bind FAD. Arg200 serves as a coordination point for dUMP. Catalysis depends on Arg200, which acts as the Involved in ionization of N3 of dUMP, leading to its activation.

Belongs to the thymidylate synthase ThyX family. As to quaternary structure, homotetramer. FAD serves as cofactor.

It catalyses the reaction dUMP + (6R)-5,10-methylene-5,6,7,8-tetrahydrofolate + NADPH + H(+) = dTMP + (6S)-5,6,7,8-tetrahydrofolate + NADP(+). It participates in pyrimidine metabolism; dTTP biosynthesis. Functionally, catalyzes the reductive methylation of 2'-deoxyuridine-5'-monophosphate (dUMP) to 2'-deoxythymidine-5'-monophosphate (dTMP) while utilizing 5,10-methylenetetrahydrofolate (mTHF) as the methyl donor, and NADPH and FADH(2) as the reductant. The chain is Flavin-dependent thymidylate synthase from Streptomyces coelicolor (strain ATCC BAA-471 / A3(2) / M145).